The following is a 232-amino-acid chain: Large ribosomal subunit protein uL1 (232 aa).

Belongs to the universal ribosomal protein uL1 family. As to quaternary structure, part of the 50S ribosomal subunit.

Binds directly to 23S rRNA. The L1 stalk is quite mobile in the ribosome, and is involved in E site tRNA release. Functionally, protein L1 is also a translational repressor protein, it controls the translation of the L11 operon by binding to its mRNA. This Xylella fastidiosa (strain M23) protein is Large ribosomal subunit protein uL1.